Here is a 523-residue protein sequence, read N- to C-terminus: Probable endopeptidase p60 (523 aa).

Residues 1–27 (MNMKKATIAATAGIAVTAFAAPTIASA) form the signal peptide. In terms of domain architecture, LysM 1 spans 28–71 (STVVVEAGDTLWGIAQDNGTTVDALKKANKLTTDKIVPGQKLQV). Residues 78–142 (KTEKSVSATW…VNGKYLGNAV (65 aa)) form the SH3b domain. The disordered stretch occupies residues 146–188 (PSATPEVKQEETTQAAPAQQTKTEVKQATPAATTEKDAVETKT). Low complexity predominate over residues 157 to 167 (TTQAAPAQQTK). Residues 198–241 (TTHTVKSGDTIWALSVKYGASVQDLMSWNNLSSSSIYVGQNIAV) enclose the LysM 2 domain. 2 stretches are compositionally biased toward low complexity: residues 251–282 (PKAE…TTTT) and 290–318 (EKQT…TNAS). 2 disordered regions span residues 251 to 323 (PKAE…YTVK) and 367 to 408 (ATNT…SSSA). The 44-residue stretch at 318–361 (SSYTVKSGDTLGKIASTFGTTVSKIKALNGLTSDNLQVGDVLKV) folds into the LysM 3 domain. In terms of domain architecture, NlpC/P60 spans 405 to 523 (SSSASAIIAE…GQYLVGFGRV (119 aa)). The active-site Nucleophile is the Cys435. Catalysis depends on His485, which acts as the Proton acceptor. The active site involves Asn497.

Belongs to the peptidase C40 family.

In terms of biological role, this major extracellular protein may be involved in the invasion of non-professional phagocytic cells by Listeria. In Listeria seeligeri, this protein is Probable endopeptidase p60 (iap).